A 206-amino-acid chain; its full sequence is Large ribosomal subunit protein uL4 (206 aa).

The segment at 46–77 (GTRAQKDREQVRHSTKKPFKQKGTGRARAGMT) is disordered. The segment covering 58–70 (HSTKKPFKQKGTG) has biased composition (basic residues).

This sequence belongs to the universal ribosomal protein uL4 family. As to quaternary structure, part of the 50S ribosomal subunit.

Functionally, one of the primary rRNA binding proteins, this protein initially binds near the 5'-end of the 23S rRNA. It is important during the early stages of 50S assembly. It makes multiple contacts with different domains of the 23S rRNA in the assembled 50S subunit and ribosome. In terms of biological role, forms part of the polypeptide exit tunnel. The polypeptide is Large ribosomal subunit protein uL4 (Polaromonas naphthalenivorans (strain CJ2)).